Consider the following 342-residue polypeptide: Porphobilinogen deaminase (342 aa).

Residue Cys249 is modified to S-(dipyrrolylmethanemethyl)cysteine. The segment at 323–342 (AAAKQGAAEDGAADSAATGE) is disordered.

The protein belongs to the HMBS family. As to quaternary structure, monomer. Dipyrromethane serves as cofactor.

The enzyme catalyses 4 porphobilinogen + H2O = hydroxymethylbilane + 4 NH4(+). It functions in the pathway porphyrin-containing compound metabolism; protoporphyrin-IX biosynthesis; coproporphyrinogen-III from 5-aminolevulinate: step 2/4. Functionally, tetrapolymerization of the monopyrrole PBG into the hydroxymethylbilane pre-uroporphyrinogen in several discrete steps. The chain is Porphobilinogen deaminase from Paraburkholderia phytofirmans (strain DSM 17436 / LMG 22146 / PsJN) (Burkholderia phytofirmans).